A 261-amino-acid polypeptide reads, in one-letter code: Chanoclavine-I dehydrogenase ifgE (261 aa).

Residues 1-20 (MASVKSRVFAITGGASGIGA) form the signal peptide. Residues I18, K48, D66, R132, Y166, K170, and T201 each contribute to the NADP(+) site. Y166 serves as the catalytic Proton acceptor. Residue K170 is the Lowers pKa of active site Tyr of the active site.

This sequence belongs to the short-chain dehydrogenases/reductases (SDR) family.

The protein operates within alkaloid biosynthesis; ergot alkaloid biosynthesis. Its function is as follows. Chanoclavine-I dehydrogenase; part of the gene cluster that mediates the biosynthesis of isofumigaclavines, fungal ergot alkaloids. The tryptophan dimethylallyltransferase ifgA catalyzes the first step of ergot alkaloid biosynthesis by condensing dimethylallyl diphosphate (DMAP) and tryptophan to form 4-dimethylallyl-L-tryptophan. The second step is catalyzed by the methyltransferase ifgB that methylates 4-dimethylallyl-L-tryptophan in the presence of S-adenosyl-L-methionine, resulting in the formation of N-methyl-dimethylallyl-L-tryptophan. The catalase ifgD and the FAD-dependent oxidoreductase ifgC then transform N-methyl-dimethylallyl-L-tryptophan to chanoclavine-I which is further oxidized by ifgE in the presence of NAD(+), resulting in the formation of chanoclavine-I aldehyde. The chanoclavine-I aldehyde reductases ifgG and/or fgaOx3 reduce chanoclavine-I aldehyde to dihydrochanoclavine-I aldehyde that spontaneously dehydrates to form 6,8-dimethyl-6,7-didehydroergoline. The festuclavine dehydrogenases ifgF1 and/or ifgF2 then catalyze the reduction of 6,8-dimethyl-6,7-didehydroergoline to form festuclavine. Hydrolysis of festuclavine by a yet undetermined cytochrome P450 monooxygenase (called ifgH) then leads to the formation of isofumigaclavine B which is in turn acetylated by ifgI to isofumigaclavine A. Penicillium roqueforti has interestingly at least two sets of genes for the consumption of chanoclavine-I aldehyde on three different loci, the OYEs ifgG/fgaOx3 and the festuclavine synthase homologs ifgF1/ifgF2. The reason for the duplication of these genes is unclear, probably to ensure the conversion of chanoclavine-I aldehyde by differential gene expression under various environmental conditions. This chain is Chanoclavine-I dehydrogenase ifgE, found in Penicillium roqueforti (strain FM164).